The sequence spans 327 residues: uncharacterized protein (327 aa).

Residues 1–24 (MKQPGFIRLATLALLSTLSFFSHG) form the signal peptide.

This is an uncharacterized protein from Salmonella typhimurium (strain LT2 / SGSC1412 / ATCC 700720).